We begin with the raw amino-acid sequence, 423 residues long: Histidine--tRNA ligase (423 aa).

The protein belongs to the class-II aminoacyl-tRNA synthetase family. In terms of assembly, homodimer.

It is found in the cytoplasm. The enzyme catalyses tRNA(His) + L-histidine + ATP = L-histidyl-tRNA(His) + AMP + diphosphate + H(+). In Actinobacillus pleuropneumoniae serotype 7 (strain AP76), this protein is Histidine--tRNA ligase.